Here is a 417-residue protein sequence, read N- to C-terminus: MIQVLLVTICLAALPYQGSSIMLESGKVNDYEVVYPQRLAPLPEGAVQQKYEDTMQYEFKVNGETIVLHLEKNKGLFSKDYSETHYSPDGRKITTYPSVEDHCYYHGRIENYEDSTASISACNGLKGHFKIQGETYFIESLKLSDSEAHAVLKYENVGKEDETHQICGVTLNWKSYDPIKRPSRLNLTPKQQTWPQTSVNLQLIVDHSMYAKYNSNSEKITKTVQERVNIMKEIFKPLNFDITLSGIEMWDKKDLITVKTAATDTLKLFAKWRQTDLLKRIDNDNAQLQTAVDFDGETVGLAFKSTMCDKRYSAGIIQDHSAIPLLMAVTIAHELGHNLGMDHDDTSKCNCNVCIMAPRLNTNPSKTFSDCSNNDYQKFLTDKKPKCIHKKSLKTDTVSTSVSGNEPLDDNVDGFHA.

A signal peptide spans 1 to 20 (MIQVLLVTICLAALPYQGSS). Residues 21–189 (IMLESGKVND…KRPSRLNLTP (169 aa)) constitute a propeptide, activation peptide. The Peptidase M12B domain maps to 197 to 392 (TSVNLQLIVD…KKPKCIHKKS (196 aa)). 3 disulfide bridges follow: Cys308–Cys387, Cys349–Cys371, and Cys351–Cys354. A Zn(2+)-binding site is contributed by His333. Glu334 is a catalytic residue. Residues His337 and His343 each contribute to the Zn(2+) site. Positions 393–417 (LKTDTVSTSVSGNEPLDDNVDGFHA) are excised as a propeptide. A disordered region spans residues 398 to 417 (VSTSVSGNEPLDDNVDGFHA). The span at 407-417 (PLDDNVDGFHA) shows a compositional bias: acidic residues.

Belongs to the venom metalloproteinase (M12B) family. P-I subfamily. Monomer. It depends on Zn(2+) as a cofactor. In terms of tissue distribution, expressed by the venom gland.

The protein resides in the secreted. Its function is as follows. This protein is an alkaline zinc metalloprotease from snake venom that possesses weak hemorrhagic activity. In Deinagkistrodon acutus (Hundred-pace snake), this protein is Snake venom metalloproteinase acutolysin-C.